The primary structure comprises 447 residues: Phosphoglucosamine mutase (447 aa).

Residue serine 108 is the Phosphoserine intermediate of the active site. Mg(2+) is bound by residues serine 108, aspartate 247, aspartate 249, and aspartate 251. Serine 108 carries the phosphoserine modification.

It belongs to the phosphohexose mutase family. Requires Mg(2+) as cofactor. Activated by phosphorylation.

It catalyses the reaction alpha-D-glucosamine 1-phosphate = D-glucosamine 6-phosphate. Functionally, catalyzes the conversion of glucosamine-6-phosphate to glucosamine-1-phosphate. The sequence is that of Phosphoglucosamine mutase from Bordetella petrii (strain ATCC BAA-461 / DSM 12804 / CCUG 43448).